The following is a 182-amino-acid chain: Ribosome-recycling factor (182 aa).

Belongs to the RRF family.

The protein localises to the cytoplasm. Functionally, responsible for the release of ribosomes from messenger RNA at the termination of protein biosynthesis. May increase the efficiency of translation by recycling ribosomes from one round of translation to another. The polypeptide is Ribosome-recycling factor (Synechococcus sp. (strain JA-2-3B'a(2-13)) (Cyanobacteria bacterium Yellowstone B-Prime)).